Here is a 416-residue protein sequence, read N- to C-terminus: Glutamyl-tRNA reductase (416 aa).

Substrate is bound by residues 49-52 (TCNR), Ser105, 110-112 (EPQ), and Gln116. The active-site Nucleophile is the Cys50. NADP(+) is bound at residue 185 to 190 (GAGETI).

The protein belongs to the glutamyl-tRNA reductase family. As to quaternary structure, homodimer.

It carries out the reaction (S)-4-amino-5-oxopentanoate + tRNA(Glu) + NADP(+) = L-glutamyl-tRNA(Glu) + NADPH + H(+). Its pathway is porphyrin-containing compound metabolism; protoporphyrin-IX biosynthesis; 5-aminolevulinate from L-glutamyl-tRNA(Glu): step 1/2. Functionally, catalyzes the NADPH-dependent reduction of glutamyl-tRNA(Glu) to glutamate 1-semialdehyde (GSA). The sequence is that of Glutamyl-tRNA reductase from Shewanella loihica (strain ATCC BAA-1088 / PV-4).